Here is a 138-residue protein sequence, read N- to C-terminus: ATP synthase epsilon chain (138 aa).

The protein belongs to the ATPase epsilon chain family. As to quaternary structure, F-type ATPases have 2 components, CF(1) - the catalytic core - and CF(0) - the membrane proton channel. CF(1) has five subunits: alpha(3), beta(3), gamma(1), delta(1), epsilon(1). CF(0) has three main subunits: a, b and c.

The protein localises to the cell membrane. Produces ATP from ADP in the presence of a proton gradient across the membrane. The protein is ATP synthase epsilon chain of Streptococcus equi subsp. equi (strain 4047).